We begin with the raw amino-acid sequence, 154 residues long: MKLRDSLAENNSIRLQAEANTWQEAVKIGVDLLVAADVVEPRYYQAILDGVEQFGPYFVIAPGLAMPHGRPEEGVKKTGFSLVTLKKPLEFNHEDNDPVDILITMAAVDANTHQEVGIMQIVNLFEDEANFDRLRACRTAQEVLDLIDRTNAAA.

One can recognise a PTS EIIA type-2 domain in the interval 6–150 (SLAENNSIRL…QEVLDLIDRT (145 aa)). The active-site Tele-phosphohistidine intermediate is histidine 68. Residue histidine 68 is modified to Phosphohistidine.

The protein localises to the cytoplasm. Functionally, the phosphoenolpyruvate-dependent sugar phosphotransferase system (sugar PTS), a major carbohydrate active transport system, catalyzes the phosphorylation of incoming sugar substrates concomitantly with their translocation across the cell membrane. The enzyme II UlaABC PTS system is involved in ascorbate transport. This Salmonella choleraesuis (strain SC-B67) protein is Ascorbate-specific PTS system EIIA component (ulaC).